Consider the following 379-residue polypeptide: Ribosomal RNA small subunit methyltransferase H (379 aa).

Residues 71-73 (GGH), E90, D157, and H164 each bind S-adenosyl-L-methionine.

This sequence belongs to the methyltransferase superfamily. RsmH family.

It is found in the cytoplasm. It carries out the reaction cytidine(1402) in 16S rRNA + S-adenosyl-L-methionine = N(4)-methylcytidine(1402) in 16S rRNA + S-adenosyl-L-homocysteine + H(+). Its function is as follows. Specifically methylates the N4 position of cytidine in position 1402 (C1402) of 16S rRNA. The sequence is that of Ribosomal RNA small subunit methyltransferase H from Treponema pallidum (strain Nichols).